Consider the following 45-residue polypeptide: Cytochrome b559 subunit beta (45 aa).

A helical transmembrane segment spans residues 20–36 (WIAVHTLAVPTVFFLGA). Residue His-24 coordinates heme.

The protein belongs to the PsbE/PsbF family. As to quaternary structure, heterodimer of an alpha subunit and a beta subunit. PSII is composed of 1 copy each of membrane proteins PsbA, PsbB, PsbC, PsbD, PsbE, PsbF, PsbH, PsbI, PsbJ, PsbK, PsbL, PsbM, PsbT, PsbX, PsbY, PsbZ, Psb30/Ycf12, peripheral proteins PsbO, CyanoQ (PsbQ), PsbU, PsbV and a large number of cofactors. It forms dimeric complexes. It depends on heme b as a cofactor.

It is found in the cellular thylakoid membrane. In terms of biological role, this b-type cytochrome is tightly associated with the reaction center of photosystem II (PSII). PSII is a light-driven water:plastoquinone oxidoreductase that uses light energy to abstract electrons from H(2)O, generating O(2) and a proton gradient subsequently used for ATP formation. It consists of a core antenna complex that captures photons, and an electron transfer chain that converts photonic excitation into a charge separation. The polypeptide is Cytochrome b559 subunit beta (Nostoc sp. (strain PCC 7120 / SAG 25.82 / UTEX 2576)).